We begin with the raw amino-acid sequence, 209 residues long: Large ribosomal subunit protein uL3 (209 aa).

Belongs to the universal ribosomal protein uL3 family. Part of the 50S ribosomal subunit. Forms a cluster with proteins L14 and L19.

In terms of biological role, one of the primary rRNA binding proteins, it binds directly near the 3'-end of the 23S rRNA, where it nucleates assembly of the 50S subunit. The sequence is that of Large ribosomal subunit protein uL3 from Brevibacillus brevis (strain 47 / JCM 6285 / NBRC 100599).